Consider the following 67-residue polypeptide: ATP synthase F(0) complex subunit 8 (67 aa).

The chain crosses the membrane as a helical span at residues 8-24 (PWFITILSMIITLFILF). N6-acetyllysine; alternate is present on lysine 54. Position 54 is an N6-succinyllysine; alternate (lysine 54). Lysine 57 carries the N6-acetyllysine modification.

It belongs to the ATPase protein 8 family. In terms of assembly, component of the ATP synthase complex composed at least of ATP5F1A/subunit alpha, ATP5F1B/subunit beta, ATP5MC1/subunit c (homooctomer), MT-ATP6/subunit a, MT-ATP8/subunit 8, ATP5ME/subunit e, ATP5MF/subunit f, ATP5MG/subunit g, ATP5MK/subunit k, ATP5MJ/subunit j, ATP5F1C/subunit gamma, ATP5F1D/subunit delta, ATP5F1E/subunit epsilon, ATP5PF/subunit F6, ATP5PB/subunit b, ATP5PD/subunit d, ATP5PO/subunit OSCP. ATP synthase complex consists of a soluble F(1) head domain (subunits alpha(3) and beta(3)) - the catalytic core - and a membrane F(0) domain - the membrane proton channel (subunits c, a, 8, e, f, g, k and j). These two domains are linked by a central stalk (subunits gamma, delta, and epsilon) rotating inside the F1 region and a stationary peripheral stalk (subunits F6, b, d, and OSCP). Interacts with PRICKLE3.

Its subcellular location is the mitochondrion membrane. Functionally, subunit 8, of the mitochondrial membrane ATP synthase complex (F(1)F(0) ATP synthase or Complex V) that produces ATP from ADP in the presence of a proton gradient across the membrane which is generated by electron transport complexes of the respiratory chain. ATP synthase complex consist of a soluble F(1) head domain - the catalytic core - and a membrane F(1) domain - the membrane proton channel. These two domains are linked by a central stalk rotating inside the F(1) region and a stationary peripheral stalk. During catalysis, ATP synthesis in the catalytic domain of F(1) is coupled via a rotary mechanism of the central stalk subunits to proton translocation. In vivo, can only synthesize ATP although its ATP hydrolase activity can be activated artificially in vitro. Part of the complex F(0) domain. This is ATP synthase F(0) complex subunit 8 from Orycteropus afer (Aardvark).